Reading from the N-terminus, the 188-residue chain is GTP-dependent dephospho-CoA kinase (188 aa).

Residues Asp43, Val44, Asp62, Glu121, and Asp144 each coordinate GTP.

It belongs to the GTP-dependent DPCK family.

The catalysed reaction is 3'-dephospho-CoA + GTP = GDP + CoA + H(+). It participates in cofactor biosynthesis; coenzyme A biosynthesis. Catalyzes the GTP-dependent phosphorylation of the 3'-hydroxyl group of dephosphocoenzyme A to form coenzyme A (CoA). This is GTP-dependent dephospho-CoA kinase from Methanococcoides burtonii (strain DSM 6242 / NBRC 107633 / OCM 468 / ACE-M).